The chain runs to 333 residues: Minor fimbrium tip subunit MfA4 (333 aa).

Positions 1–18 (MKKYLLYASLLTSVLLFS) are cleaved as a signal peptide. A lipid anchor (N-palmitoyl cysteine) is attached at C19. C19 carries the S-diacylglycerol cysteine lipid modification. Positions 19–53 (CSKNNPSEPVEDRSIEISIRVDDFTKTGETVRYER) are excised as a propeptide.

This sequence belongs to the bacteroidetes fimbrillin superfamily. FimA/Mfa1 family. As to quaternary structure, component of the fimbrium tip. Minor fimbriae are composed of a structural subunit, most often Mfa1, and the accessory subunits Mfa3, Mfa4 and Mfa5. Mfa4 is required for Mfa3 and Mfa5 insertion into the fimbrium. Fimbrium assembly occurs by linear, head-to-tail oligomerization of fimbrial subunits. This is mediated via insertion of a C-terminal beta-strand from one subunit into a groove in the N-terminal domain of the following subunit.

It is found in the fimbrium. The protein localises to the cell outer membrane. Tip subunit of the minor fimbriae. These filamentous pili are attached to the cell surface; they mediate biofilm formation, adhesion onto host cells and onto other bacteria that are part of the oral microbiome. They play an important role in invasion of periodontal tissues and are recognized as major virulence factors. This is Minor fimbrium tip subunit MfA4 from Porphyromonas gingivalis (strain ATCC 33277 / DSM 20709 / CIP 103683 / JCM 12257 / NCTC 11834 / 2561).